The chain runs to 24 residues: Acidic phospholipase A2 4 (24 aa).

The protein belongs to the phospholipase A2 family. Group II subfamily. The cofactor is Ca(2+). As to expression, expressed by the venom gland.

It is found in the secreted. It catalyses the reaction a 1,2-diacyl-sn-glycero-3-phosphocholine + H2O = a 1-acyl-sn-glycero-3-phosphocholine + a fatty acid + H(+). Functionally, PLA2 catalyzes the calcium-dependent hydrolysis of the 2-acyl groups in 3-sn-phosphoglycerides. In Trimeresurus stejnegeri (Chinese green tree viper), this protein is Acidic phospholipase A2 4.